A 507-amino-acid chain; its full sequence is tRNA (guanine(6)-N(2))-methyltransferase THUMP3 (507 aa).

A THUMP domain is found at Lys165–Leu285.

Belongs to the methyltransferase superfamily. Part of the heterodimeric THUMPD3-TRM112 methyltransferase complex; this complex forms an active tRNA methyltransferase, where TRMT112 acts as an activator of the catalytic subunit THUMPD3.

It localises to the cytoplasm. The catalysed reaction is guanosine(6) in tRNA + S-adenosyl-L-methionine = N(2)-methylguanosine(6) in tRNA + S-adenosyl-L-homocysteine + H(+). It catalyses the reaction guanosine(7) in tRNA + S-adenosyl-L-methionine = N(2)-methylguanosine(7) in tRNA + S-adenosyl-L-homocysteine + H(+). In terms of biological role, catalytic subunit of the THUMPD3-TRM112 methyltransferase complex, that specifically mediates the S-adenosyl-L-methionine-dependent N(2)-methylation of guanosine nucleotide at position 6 (m2G6) in tRNAs. This is one of the major tRNA (guanine-N(2))-methyltransferases. Also catalyzes the S-adenosyl-L-methionine-dependent N(2)-methylation of guanosine nucleotide at position 7 of tRNA(Trp). The polypeptide is tRNA (guanine(6)-N(2))-methyltransferase THUMP3 (Homo sapiens (Human)).